We begin with the raw amino-acid sequence, 495 residues long: Glutamate--tRNA ligase (495 aa).

The 'HIGH' region signature appears at 12 to 22; sequence PSPTGHLHIGN. Residues 259–263 carry the 'KMSKS' region motif; sequence KLSKR. Lysine 262 serves as a coordination point for ATP.

This sequence belongs to the class-I aminoacyl-tRNA synthetase family. Glutamate--tRNA ligase type 1 subfamily. Monomer.

The protein resides in the cytoplasm. It carries out the reaction tRNA(Glu) + L-glutamate + ATP = L-glutamyl-tRNA(Glu) + AMP + diphosphate. Its function is as follows. Catalyzes the attachment of glutamate to tRNA(Glu) in a two-step reaction: glutamate is first activated by ATP to form Glu-AMP and then transferred to the acceptor end of tRNA(Glu). The sequence is that of Glutamate--tRNA ligase from Pediococcus pentosaceus (strain ATCC 25745 / CCUG 21536 / LMG 10740 / 183-1w).